Consider the following 246-residue polypeptide: Large ribosomal subunit protein uL30 (246 aa).

An N-acetylmethionine modification is found at Met-1. A run of 4 repeats spans residues 7 to 17 (KKVPSVPESLL), 18 to 28 (KRRQAYAAAKA), 29 to 40 (KRLKRLLAQKKF), and 41 to 52 (RKAQRKIIYERA). The segment at 7-52 (KKVPSVPESLLKRRQAYAAAKAKRLKRLLAQKKFRKAQRKIIYERA) is 4 X 12 AA tandem repeats.

Belongs to the universal ribosomal protein uL30 family. As to quaternary structure, component of the large ribosomal subunit.

The protein localises to the cytoplasm. In terms of biological role, component of the large ribosomal subunit. The ribosome is a large ribonucleoprotein complex responsible for the synthesis of proteins in the cell. Binds to G-rich structures in 28S rRNA and in mRNAs. Plays a regulatory role in the translation apparatus; inhibits cell-free translation of mRNAs. The sequence is that of Large ribosomal subunit protein uL30 (RPL7) from Gallus gallus (Chicken).